The chain runs to 395 residues: Levanbiose-producing levanase (395 aa).

Asp1 is a catalytic residue. Residues Trp59 to Thr60, Arg124 to Asp125, Glu173, and Trp261 contribute to the substrate site.

It belongs to the glycosyl hydrolase 32 family.

The protein localises to the membrane. It catalyses the reaction Hydrolysis of (2-&gt;6)-beta-D-fructofuranan, to remove successive disaccharide residues as levanbiose, i.e. 6-(beta-D-fructofuranosyl)-D-fructose, from the end of the chain.. In terms of biological role, catalyzes the degradation of levan mainly into levanbiose (difructose). Can also hydrolyze inulin. In Geobacillus stearothermophilus (Bacillus stearothermophilus), this protein is Levanbiose-producing levanase (levB).